Reading from the N-terminus, the 215-residue chain is Secretory component protein psh3 (215 aa).

The Cytoplasmic segment spans residues 1 to 21 (MAKRSIFRFADEKGLKVAARY). A helical membrane pass occupies residues 22–42 (GVLMSTSFIFALLFHSSVADV). Residues 43–67 (NTLWSPGPESAFDAAETYYTLVAGS) are Extracellular-facing. Residues 68-88 (HFIVKYTVYTIMGLNMIFHLI) traverse the membrane as a helical segment. The Cytoplasmic portion of the chain corresponds to 89–105 (QATGAKGDDKLFFYSST). The chain crosses the membrane as a helical span at residues 106–126 (LLYLTALILFIVNVAPSMLVV). The Extracellular segment spans residues 127-147 (KLQNYVQFPRNMHLSVLAASH). Residues 148 to 168 (VLVEFLLAGVILIQLGYVFGY) traverse the membrane as a helical segment. Residues 169-215 (HVQSIQQREYAEDMREQELAEKAKLESESATTQSVETVSTESVSKRK) are Cytoplasmic-facing. Residues 190–215 (KAKLESESATTQSVETVSTESVSKRK) form a disordered region. A compositionally biased stretch (low complexity) spans 196 to 215 (ESATTQSVETVSTESVSKRK).

To yeast SHR3. Monomer.

The protein resides in the endoplasmic reticulum membrane. Functionally, involved in amino acid permease processing and required for the efficient translocation of structurally related amino acid permeases from the endoplasmic reticulum to the plasma membrane. The protein is Secretory component protein psh3 (psh3) of Schizosaccharomyces pombe (strain 972 / ATCC 24843) (Fission yeast).